Reading from the N-terminus, the 123-residue chain is uncharacterized protein (123 aa).

Residues 100 to 123 (NKQPKTTHHFSTNSSEYKSRKSKH) form a disordered region.

This is an uncharacterized protein from Acanthamoeba polyphaga mimivirus (APMV).